Here is a 424-residue protein sequence, read N- to C-terminus: Argininosuccinate synthase (424 aa).

Residues 9-17 (AYSGGLDTS) and Ala35 each bind ATP. L-citrulline contacts are provided by Tyr86 and Ser91. Residue 114-122 (SHGATGKGN) participates in ATP binding. Thr118, Asn122, and Asp123 together coordinate L-aspartate. Residue Asn122 coordinates L-citrulline. L-citrulline contacts are provided by Arg126, Ser179, Ser188, Glu269, and Tyr281.

This sequence belongs to the argininosuccinate synthase family. Homotetramer.

The enzyme catalyses L-citrulline + L-aspartate + ATP = 2-(N(omega)-L-arginino)succinate + AMP + diphosphate + H(+). The protein operates within amino-acid biosynthesis; L-arginine biosynthesis; L-arginine from L-ornithine and carbamoyl phosphate: step 2/3. Its pathway is nitrogen metabolism; urea cycle; (N(omega)-L-arginino)succinate from L-aspartate and L-citrulline: step 1/1. This is Argininosuccinate synthase from Anopheles gambiae (African malaria mosquito).